We begin with the raw amino-acid sequence, 29 residues long: Protein Tat (29 aa).

The tract at residues 1 to 29 is disordered; the sequence is PSSQPRGDPTGQEEPKKKVEKKTTTDPFD. The Cell attachment site signature appears at 6–8; it reads RGD. A compositionally biased stretch (basic and acidic residues) spans 13 to 29; that stretch reads EEPKKKVEKKTTTDPFD.

It belongs to the lentiviruses Tat family. As to quaternary structure, interacts with host CCNT1. Associates with the P-TEFb complex composed at least of Tat, P-TEFb (CDK9 and CCNT1), TAR RNA, RNA Pol II. Recruits the HATs CREBBP, TAF1/TFIID, EP300, PCAF and GCN5L2. Interacts with host KAT5/Tip60; this interaction targets the latter to degradation. Interacts with the host deacetylase SIRT1. Interacts with host capping enzyme RNGTT; this interaction stimulates RNGTT. Binds to host KDR, and to the host integrins ITGAV/ITGB3 and ITGA5/ITGB1. Interacts with host KPNB1/importin beta-1 without previous binding to KPNA1/importin alpha-1. Interacts with EIF2AK2. Interacts with host nucleosome assembly protein NAP1L1; this interaction may be required for the transport of Tat within the nucleus, since the two proteins interact at the nuclear rim. Interacts with host C1QBP/SF2P32; this interaction involves lysine-acetylated Tat. Interacts with the host chemokine receptors CCR2, CCR3 and CXCR4. Interacts with host DPP4/CD26; this interaction may trigger an anti-proliferative effect. Interacts with host LDLR. Interacts with the host extracellular matrix metalloproteinase MMP1. Interacts with host PRMT6; this interaction mediates Tat's methylation. Interacts with, and is ubiquitinated by MDM2/Hdm2. Interacts with host PSMC3 and HTATIP2. Interacts with STAB1; this interaction may overcome SATB1-mediated repression of IL2 and IL2RA (interleukin) in T cells by binding to the same domain than HDAC1. Interacts (when acetylated) with human CDK13, thereby increasing HIV-1 mRNA splicing and promoting the production of the doubly spliced HIV-1 protein Nef. Post-translationally, acetylation by EP300, CREBBP, GCN5L2/GCN5 and PCAF regulates the transactivation activity of Tat. In terms of processing, phosphorylated by EIF2AK2 on serine and threonine residues adjacent to the basic region important for TAR RNA binding and function. Phosphorylation of Tat by EIF2AK2 is dependent on the prior activation of EIF2AK2 by dsRNA. Asymmetrical arginine methylation by host PRMT6 seems to diminish the transactivation capacity of Tat and affects the interaction with host CCNT1. Post-translationally, polyubiquitination by MDM2 does not target Tat to degradation, but activates its transactivation function and fosters interaction with CCNT1 and TAR RNA.

It localises to the host nucleus. Its subcellular location is the host nucleolus. The protein resides in the host cytoplasm. The protein localises to the secreted. Functionally, transcriptional activator that increases RNA Pol II processivity, thereby increasing the level of full-length viral transcripts. Recognizes a hairpin structure at the 5'-LTR of the nascent viral mRNAs referred to as the transactivation responsive RNA element (TAR) and recruits the cyclin T1-CDK9 complex (P-TEFb complex) that will in turn hyperphosphorylate the RNA polymerase II to allow efficient elongation. The CDK9 component of P-TEFb and other Tat-activated kinases hyperphosphorylate the C-terminus of RNA Pol II that becomes stabilized and much more processive. Other factors such as HTATSF1/Tat-SF1, SUPT5H/SPT5, and HTATIP2 are also important for Tat's function. Besides its effect on RNA Pol II processivity, Tat induces chromatin remodeling of proviral genes by recruiting the histone acetyltransferases (HATs) CREBBP, EP300 and PCAF to the chromatin. This also contributes to the increase in proviral transcription rate, especially when the provirus integrates in transcriptionally silent region of the host genome. To ensure maximal activation of the LTR, Tat mediates nuclear translocation of NF-kappa-B by interacting with host RELA. Through its interaction with host TBP, Tat may also modulate transcription initiation. Tat can reactivate a latently infected cell by penetrating in it and transactivating its LTR promoter. In the cytoplasm, Tat is thought to act as a translational activator of HIV-1 mRNAs. Its function is as follows. Extracellular circulating Tat can be endocytosed by surrounding uninfected cells via the binding to several surface receptors such as CD26, CXCR4, heparan sulfate proteoglycans (HSPG) or LDLR. Neurons are rarely infected, but they internalize Tat via their LDLR. Endosomal low pH allows Tat to cross the endosome membrane to enter the cytosol and eventually further translocate into the nucleus, thereby inducing severe cell dysfunctions ranging from cell activation to cell death. Through its interaction with nuclear HATs, Tat is potentially able to control the acetylation-dependent cellular gene expression. Tat seems to inhibit the HAT activity of KAT5/Tip60 and TAF1, and consequently modify the expression of specific cellular genes. Modulates the expression of many cellular genes involved in cell survival, proliferation or in coding for cytokines (such as IL10) or cytokine receptors. May be involved in the derepression of host interleukin IL2 expression. Mediates the activation of cyclin-dependent kinases and dysregulation of microtubule network. Tat plays a role in T-cell and neurons apoptosis. Tat induced neurotoxicity and apoptosis probably contribute to neuroAIDS. Host extracellular matrix metalloproteinase MMP1 cleaves Tat and decreases Tat's mediated neurotoxicity. Circulating Tat also acts as a chemokine-like and/or growth factor-like molecule that binds to specific receptors on the surface of the cells, affecting many cellular pathways. In the vascular system, Tat binds to ITGAV/ITGB3 and ITGA5/ITGB1 integrins dimers at the surface of endothelial cells and competes with bFGF for heparin-binding sites, leading to an excess of soluble bFGF. Binds to KDR/VEGFR-2. All these Tat-mediated effects enhance angiogenesis in Kaposi's sarcoma lesions. In Homo sapiens (Human), this protein is Protein Tat.